Here is a 229-residue protein sequence, read N- to C-terminus: Cytidylate kinase (229 aa).

15–23 (GPAASGKST) is an ATP binding site.

The protein belongs to the cytidylate kinase family. Type 1 subfamily.

The protein localises to the cytoplasm. The enzyme catalyses CMP + ATP = CDP + ADP. It carries out the reaction dCMP + ATP = dCDP + ADP. The chain is Cytidylate kinase from Herpetosiphon aurantiacus (strain ATCC 23779 / DSM 785 / 114-95).